The following is a 471-amino-acid chain: 3-isopropylmalate dehydratase large subunit (471 aa).

[4Fe-4S] cluster is bound by residues C346, C406, and C409.

It belongs to the aconitase/IPM isomerase family. LeuC type 1 subfamily. In terms of assembly, heterodimer of LeuC and LeuD. [4Fe-4S] cluster is required as a cofactor.

It catalyses the reaction (2R,3S)-3-isopropylmalate = (2S)-2-isopropylmalate. The protein operates within amino-acid biosynthesis; L-leucine biosynthesis; L-leucine from 3-methyl-2-oxobutanoate: step 2/4. Its function is as follows. Catalyzes the isomerization between 2-isopropylmalate and 3-isopropylmalate, via the formation of 2-isopropylmaleate. The protein is 3-isopropylmalate dehydratase large subunit of Bacillus pumilus (strain SAFR-032).